Consider the following 131-residue polypeptide: Cruxhalorhodopsin-1 (131 aa).

The helical transmembrane segment at 1–11 threads the bilayer; the sequence is PMILLALGLLA. Residues 12-14 lie on the Cytoplasmic side of the membrane; that stretch reads DTD. A helical transmembrane segment spans residues 15-38; the sequence is IASLFTAITMDIGMCVTGLAAALI. At 39-41 the chain is on the extracellular side; that stretch reads TSS. Residues 42–64 traverse the membrane as a helical segment; that stretch reads HLLRWVFYGISCAFFVAVLYVLL. Over 65–76 the chain is Cytoplasmic; sequence VQWPADAEAAGT. A helical transmembrane segment spans residues 77 to 100; sequence SEIFGTLKILTVVLWLGYPILWAL. Residues 101-109 lie on the Extracellular side of the membrane; sequence GSEGVALLS. Residues 110–131 traverse the membrane as a helical segment; sequence VGVTSWGYSGLDILAKYVFAFI. K125 is modified (N6-(retinylidene)lysine).

This sequence belongs to the archaeal/bacterial/fungal opsin family.

The protein resides in the cell membrane. Its function is as follows. Light-driven chloride pump. This is Cruxhalorhodopsin-1 (choP1) from Haloarcula argentinensis.